Reading from the N-terminus, the 533-residue chain is Ribonuclease Y (533 aa).

The disordered stretch occupies residues 16 to 41 (VERIRRRAEQDAAEQTERVRREAEQI). A compositionally biased stretch (basic and acidic residues) spans 22–41 (RAEQDAAEQTERVRREAEQI). The KH domain maps to 223–289 (VVSVLHLPSD…RITLTALVSD (67 aa)). The HD domain occupies 349–442 (VLAHLVESAH…TQAADQISGG (94 aa)).

It belongs to the RNase Y family.

In terms of biological role, endoribonuclease that initiates mRNA decay. The polypeptide is Ribonuclease Y (Parafrankia sp. (strain EAN1pec)).